We begin with the raw amino-acid sequence, 397 residues long: Phosphoglycerate kinase (397 aa).

Residues Asp-25–Asn-27, Arg-41, His-64–Arg-67, Arg-118, and Arg-151 each bind substrate. ATP-binding positions include Lys-202, Glu-324, and Gly-350 to Thr-353.

This sequence belongs to the phosphoglycerate kinase family. In terms of assembly, monomer.

It localises to the cytoplasm. It catalyses the reaction (2R)-3-phosphoglycerate + ATP = (2R)-3-phospho-glyceroyl phosphate + ADP. It participates in carbohydrate degradation; glycolysis; pyruvate from D-glyceraldehyde 3-phosphate: step 2/5. The chain is Phosphoglycerate kinase from Leptothrix cholodnii (strain ATCC 51168 / LMG 8142 / SP-6) (Leptothrix discophora (strain SP-6)).